A 752-amino-acid polypeptide reads, in one-letter code: Putative xanthine dehydrogenase molybdenum-binding subunit XdhA (752 aa).

Mo-molybdopterin-binding residues include Q206, F237, R350, and A516.

Belongs to the xanthine dehydrogenase family. As to quaternary structure, heterotrimer of XdhA, XdhB and XdhC. Mo-molybdopterin serves as cofactor.

It carries out the reaction xanthine + NAD(+) + H2O = urate + NADH + H(+). The enzyme catalyses hypoxanthine + NAD(+) + H2O = xanthine + NADH + H(+). The protein operates within purine metabolism; hypoxanthine degradation; urate from hypoxanthine: step 1/2. It functions in the pathway purine metabolism; hypoxanthine degradation; urate from hypoxanthine: step 2/2. Its function is as follows. Presumed to be a dehydrogenase, but possibly an oxidase. Participates in limited purine salvage (requires aspartate) but does not support aerobic growth on purines as the sole carbon source (purine catabolism). Deletion results in increased adenine sensitivity, suggesting that this protein contributes to the conversion of adenine to guanine nucleotides during purine salvage. The protein is Putative xanthine dehydrogenase molybdenum-binding subunit XdhA (xdhA) of Escherichia coli (strain K12).